A 532-amino-acid chain; its full sequence is Chondroitin sulfate N-acetylgalactosaminyltransferase 1 (532 aa).

Topologically, residues methionine 1–arginine 14 are cytoplasmic. The chain crosses the membrane as a helical; Signal-anchor for type II membrane protein span at residues valine 15–threonine 35. The Lumenal portion of the chain corresponds to proline 36–threonine 532. Residues tyrosine 57–alanine 100 adopt a coiled-coil conformation. 2 N-linked (GlcNAc...) asparagine glycosylation sites follow: asparagine 315 and asparagine 324. A divalent metal cation is bound by residues aspartate 360 and histidine 477.

It belongs to the chondroitin N-acetylgalactosaminyltransferase family. N-glycosylated. As to expression, ubiquitous, with the highest levels in placenta, thyroid, bladder, prostate and adrenal gland. Detected at low levels in the other tissues examined.

It localises to the golgi apparatus. Its subcellular location is the golgi stack membrane. It catalyses the reaction 3-O-(beta-D-GlcA-(1-&gt;3)-beta-D-Gal-(1-&gt;3)-beta-D-Gal-(1-&gt;4)-beta-D-Xyl)-L-seryl-[protein] + UDP-N-acetyl-alpha-D-galactosamine = 3-O-(beta-D-GalNAc-(1-&gt;4)-beta-D-GlcA-(1-&gt;3)-beta-D-Gal-(1-&gt;3)-beta-D-Gal-(1-&gt;4)-beta-D-Xyl)-L-seryl-[protein] + UDP + H(+). Transfers 1,4-N-acetylgalactosamine (GalNAc) from UDP-GalNAc to the non-reducing end of glucuronic acid (GlcUA). Required for addition of the first GalNAc to the core tetrasaccharide linker and for elongation of chondroitin chains. Important role in chondroitin chain biosynthesis in cartilage formation and subsequent endochondral ossification. Moreover, is involved in the metabolism of aggrecan. This chain is Chondroitin sulfate N-acetylgalactosaminyltransferase 1, found in Homo sapiens (Human).